An 82-amino-acid chain; its full sequence is Diphthamide biosynthesis protein 3 (82 aa).

Residues 3-59 (TYDEIEIEDMTFEPENQMFTYPCPCGDRFQIYLDDMFEGEKVAVCPSCSLMIDVVFD) form the DPH-type MB domain. Positions 25, 27, 47, and 50 each coordinate Fe cation. The interval 66 to 82 (YYEEAGIHPPEPIAAAA) is required for interaction with the elongator complex.

The protein belongs to the DPH3 family. In terms of assembly, component of the 2-(3-amino-3-carboxypropyl)histidine synthase complex composed of DPH1, DPH2, KTI11/DPH3 and a NADH-dependent reductase, predominantly CBR1. Interacts with DPH1. Interacts with DPH2. Interacts with CBR1. Interacts with elongation factor 2. Interacts with ATS1/KTI13; the interaction is direct. Interacts with the 40S ribosomal protein RPS7A. Interacts with the 40S ribosomal protein RPS19A. Interacts with the elongator complex subunit IKI3/ELP1. Interacts with the elongator complex subunit ELP2. Interacts with the elongator complex subunit ELP3. Interacts with the elongator complex subunit ELP5.

The protein resides in the cytoplasm. It localises to the nucleus. It catalyses the reaction [3Fe-4S](1+)-[protein] + Fe(2+)-[Dph3] = [3Fe-4S](0)-[protein] + Fe(3+)-[Dph3]. The enzyme catalyses 2 [3Fe-4S](0)-[protein] + 2 Fe(2+)-[Dph3] + NADH = 2 [4Fe-4S](1+)-[protein] + 2 [Dph3] + NAD(+) + H(+). The protein operates within protein modification; peptidyl-diphthamide biosynthesis. Its function is as follows. Required for the first step of diphthamide biosynthesis, a post-translational modification of histidine which occurs in elongation factor 2. DPH1 and DPH2 transfer a 3-amino-3-carboxypropyl (ACP) group from S-adenosyl-L-methionine (SAM) to a histidine residue, the reaction is assisted by a reduction system comprising KTI11/DPH3 and a NADH-dependent reductase, predominantly CBR1. Acts as an electron donor to reduce the Fe-S cluster in DPH1-DPH2 keeping the [4Fe-4S] clusters in the active and reduced state. Restores iron to DPH1-DPH2 iron-sulfur clusters which have degraded from [4Fe-4S] to [3Fe-4S] by donating an iron atom to reform [4Fe-4S] clusters, in a manner dependent on the presence of elongation factor 2 and SAM. Together with ATS1; associates with the elongator complex and is required for tRNA Wobble base modifications mediated by the elongator complex. The elongator complex is required for multiple tRNA modifications, including mcm5U (5-methoxycarbonylmethyl uridine), mcm5s 2U (5-methoxycarbonylmethyl-2-thiouridine), and ncm5U (5-carbamoylmethyl uridine). This Saccharomyces cerevisiae (strain ATCC 204508 / S288c) (Baker's yeast) protein is Diphthamide biosynthesis protein 3.